A 206-amino-acid polypeptide reads, in one-letter code: Peroxynitrite isomerase (206 aa).

Positions 21 to 27 match the GXWXGXG motif; that stretch reads GTWEGNG. Heme b is bound at residue H190.

The protein belongs to the nitrobindin family. In terms of assembly, homodimer. It depends on heme b as a cofactor.

It carries out the reaction peroxynitrite = nitrate. Its pathway is nitrogen metabolism. Its function is as follows. Heme-binding protein able to scavenge peroxynitrite and to protect free L-tyrosine against peroxynitrite-mediated nitration, by acting as a peroxynitrite isomerase that converts peroxynitrite to nitrate. Therefore, this protein likely plays a role in peroxynitrite sensing and in the detoxification of reactive nitrogen and oxygen species (RNS and ROS, respectively). Is able to bind nitric oxide (NO) in vitro, but may act as a sensor of peroxynitrite levels in vivo. This chain is Peroxynitrite isomerase, found in Kocuria rhizophila (strain ATCC 9341 / DSM 348 / NBRC 103217 / DC2201).